The following is a 241-amino-acid chain: Large ribosomal subunit protein uL30 (241 aa).

Positions 1 to 32 are disordered; the sequence is MATTLKPETLQKKEKAQQKTAEERAAAKKVRK. The segment covering 9–26 has biased composition (basic and acidic residues); sequence TLQKKEKAQQKTAEERAA.

The protein belongs to the universal ribosomal protein uL30 family. Component of the large ribosomal subunit. Mature ribosomes consist of a small (40S) and a large (60S) subunit. The 40S subunit contains about 32 different proteins and 1 molecule of RNA (18S). The 60S subunit contains 45 different proteins and 3 molecules of RNA (25S, 5.8S and 5S).

The protein localises to the cytoplasm. Component of the ribosome, a large ribonucleoprotein complex responsible for the synthesis of proteins in the cell. The small ribosomal subunit (SSU) binds messenger RNAs (mRNAs) and translates the encoded message by selecting cognate aminoacyl-transfer RNA (tRNA) molecules. The large subunit (LSU) contains the ribosomal catalytic site termed the peptidyl transferase center (PTC), which catalyzes the formation of peptide bonds, thereby polymerizing the amino acids delivered by tRNAs into a polypeptide chain. The nascent polypeptides leave the ribosome through a tunnel in the LSU and interact with protein factors that function in enzymatic processing, targeting, and the membrane insertion of nascent chains at the exit of the ribosomal tunnel. This is Large ribosomal subunit protein uL30 from Candida albicans (strain SC5314 / ATCC MYA-2876) (Yeast).